Here is a 938-residue protein sequence, read N- to C-terminus: MFKKLFGDPNARKLKRFQPLVAEINLLAEDFANLTDEALAQKTVEFRAKLDKANSDEETEEILDEILPEAFAVVREAAWRVLQMRHYDVQLLGGIVLHKGQIAEMRTGEGKTLVATLPAYLNGLTGKGVHVVTVNDYLARRDAEWMGQVHRFLGLTVGLIQSSMGPAEKIENYRCDITYTTNSELGFDYLRDNMATTIQEVVQRPFNYCIIDEVDSILVDEARTPLIISGQIERPTEKYLQAAEIAKQLVPQVEEDGPGDYEVDEKARNVLMTDEGFAKAEQLLGVTDLYDEQNPWAHYIFNAVKAKELFKKDVNYIVRGDEVVIVDEFTGRIMPGRRWSDGLHQAIEAQEGVTIQKETQTLANITYQNFFLLYPKLSGMTGTAKTEETEFEKVYNLEVTIIPTNRPTKRQDLADVVYKNEKAKWRAVAEECAQMHETGRPVLVGTTSVEKSEIISAYLHELGIPHNLLNARPENVEKESEIVAQAGRKGAVTIATNMAGRGTDIILGGNSEYMARLKMREYFMPQIVKPEDEGNFAIAGSGKNSGGQGFDTNNKQKKKTWKTTLDIYPTELPTDLEQQLKEAVKFAVDQYGNQSLTELEAEEKLAIASENAPTADPVVQKLRTVYHAIEKTYHDLTSVEHDEVIQNGGLHVIGTERHESRRIDNQLRGRAGRQGDPGSTRFFLSLEDNLLRIFGGDRVAGLMNAFRVEEDMPIESKMLTNSLEGAQKKVETFYYDARKQVFEYDEVMNNQRRAIYAERRRVLEGQDLKEQVIQYAEKTMSEIVEAYVNPELPPEEWKLDKLLDKAKEFIYLLEDLEPKDIEDMTVPEIKTFLHEEVRKAYDLKEAQVEKSQPGLMRQAERFFILQQIDTLWREHLQAIDALRESVGLRGYGQKDPLIEYKQEGYEMFLEMMIDIRRNVVYSLFQFQPQRQPQQPQAV.

Residues Gln-90, 108-112 (GEGKT), and Asp-504 each bind ATP.

It belongs to the SecA family. In terms of assembly, monomer and homodimer. Part of the essential Sec protein translocation apparatus which comprises SecA, SecYEG and auxiliary proteins SecDF. Other proteins may also be involved.

The protein localises to the cell inner membrane. It localises to the cellular thylakoid membrane. Its subcellular location is the cytoplasm. It catalyses the reaction ATP + H2O + cellular proteinSide 1 = ADP + phosphate + cellular proteinSide 2.. Part of the Sec protein translocase complex. Interacts with the SecYEG preprotein conducting channel. Has a central role in coupling the hydrolysis of ATP to the transfer of proteins into and across the cell membrane, serving as an ATP-driven molecular motor driving the stepwise translocation of polypeptide chains across the membrane. In terms of biological role, probably participates in protein translocation into and across both the cytoplasmic and thylakoid membranes in cyanobacterial cells. In Picosynechococcus sp. (strain ATCC 27264 / PCC 7002 / PR-6) (Agmenellum quadruplicatum), this protein is Protein translocase subunit SecA.